A 492-amino-acid chain; its full sequence is ATP synthase subunit beta, chloroplastic (492 aa).

170–177 is a binding site for ATP; that stretch reads GGAGVGKT.

This sequence belongs to the ATPase alpha/beta chains family. As to quaternary structure, F-type ATPases have 2 components, CF(1) - the catalytic core - and CF(0) - the membrane proton channel. CF(1) has five subunits: alpha(3), beta(3), gamma(1), delta(1), epsilon(1). CF(0) has four main subunits: a(1), b(1), b'(1) and c(9-12).

The protein resides in the plastid. It localises to the chloroplast thylakoid membrane. The enzyme catalyses ATP + H2O + 4 H(+)(in) = ADP + phosphate + 5 H(+)(out). Functionally, produces ATP from ADP in the presence of a proton gradient across the membrane. The catalytic sites are hosted primarily by the beta subunits. The protein is ATP synthase subunit beta, chloroplastic of Angiopteris evecta (Mule's foot fern).